Here is a 220-residue protein sequence, read N- to C-terminus: Histone H1B (220 aa).

2 disordered regions span residues 1–45 and 99–220; these read MTAT…PSAS and QVKG…APKK. Residues 28 to 45 show a composition bias toward low complexity; that stretch reads KKVAGGAKAKKPSGPSAS. The H15 domain occupies 40–113; it reads SGPSASELIV…GASGSFKLNK (74 aa). Basic residues-rich tracts occupy residues 122–134, 141–151, 158–196, and 204–220; these read AAKKKPAAPKAKK, KAPKSPKKPKK, SPKKVKKLAKAAKSPKKPKAVKAKKVAKSPAKKATKPKT, and KVAKPKAAKAKKPAPKK.

This sequence belongs to the histone H1/H5 family.

The protein localises to the nucleus. It is found in the chromosome. Histones H1 are necessary for the condensation of nucleosome chains into higher-order structures. The sequence is that of Histone H1B from Xenopus laevis (African clawed frog).